A 60-amino-acid polypeptide reads, in one-letter code: Large ribosomal subunit protein bL32 (60 aa).

This sequence belongs to the bacterial ribosomal protein bL32 family.

This chain is Large ribosomal subunit protein bL32, found in Streptococcus equi subsp. zooepidemicus (strain MGCS10565).